Reading from the N-terminus, the 701-residue chain is MSALKDVDQLTEAEARAEHARLAREIAGHDKAYYQSDAPKISDAAYDALRRKLEAIEVRFPQFIDLLSPTQRVGAVPSGKFGEIRHAVPMLSLGNAFNDEDVADFVGRIRRFLGLAESDVVAVTAEPKIDGLSASLRYVGGKLVHGATRGDGQTGEDVTQNLLTLDDIPDTLPPGDWPDVVEVRGEVYMSHADFAALNERQIEAGKDAYKNPRNAAAGSLRQIDPKMTSQRPLRFFAYAWGEVSEPLSDTQMGAVARFGEMGFPVNDLMARCETVEALLAVYRDIEARRAGLGYDIDGVVYKADRLDWQERLGFVARAPRWAIAHKFPAEQATTILEAIDIQVGRTGALTPVARLTPVTVGGVVVTNATLHNQDEIERKDIRVGDTVVIQRAGDVIPQVVRVVDPDRPGRGEAFDFPTECPVCGSQALREHDAKTGKLDVVRRCTGGLICGAQLKERLKHFVSRKAFDIEGLGIKQIEAFQEEGLITEPAHIFTLKARNEAGEIKPPLQEREGFGETSIRNLFTSIEDRRTITLARFLNALGIRHVGENTSALFARTYGSWAAFHAAAANLSDEAVRAEMLGIDGIGNAAVEALEQYFTEAHNRDLLDRLVAQLTIEDAEAIANDSPVAGKTVVFTGALERMTRDEAKAKAQALGAKVAGSVSGKTDYLVAGPGAGSKAKKAAELGVETLTEDEWFDLIGA.

Residues 43–47 (DAAYD), 92–93 (SL), and glutamate 126 each bind NAD(+). The active-site N6-AMP-lysine intermediate is the lysine 128. The NAD(+) site is built by arginine 149, glutamate 186, lysine 302, and lysine 326. Residues cysteine 420, cysteine 423, cysteine 444, and cysteine 450 each coordinate Zn(2+). In terms of domain architecture, BRCT spans 623–701 (ANDSPVAGKT…EDEWFDLIGA (79 aa)).

Belongs to the NAD-dependent DNA ligase family. LigA subfamily. Requires Mg(2+) as cofactor. It depends on Mn(2+) as a cofactor.

The catalysed reaction is NAD(+) + (deoxyribonucleotide)n-3'-hydroxyl + 5'-phospho-(deoxyribonucleotide)m = (deoxyribonucleotide)n+m + AMP + beta-nicotinamide D-nucleotide.. In terms of biological role, DNA ligase that catalyzes the formation of phosphodiester linkages between 5'-phosphoryl and 3'-hydroxyl groups in double-stranded DNA using NAD as a coenzyme and as the energy source for the reaction. It is essential for DNA replication and repair of damaged DNA. The protein is DNA ligase of Maricaulis maris (strain MCS10) (Caulobacter maris).